The sequence spans 376 residues: WW domain-binding protein 4 (376 aa).

The Matrin-type zinc finger occupies 11–42 (KFCDYCKCWIADNRPSVEFHERGKNHKENVAK). Over residues 94–107 (ITPVTSTIPPTSTS) the composition is skewed to low complexity. Disordered regions lie at residues 94 to 128 (ITPVTSTIPPTSTSNQQKEKKEKKKRKKDPSKGRW), 189 to 335 (SRWE…EPKV), and 356 to 376 (FKKRRTENGKSRNLRQRGDDQ). 2 WW domains span residues 122–155 (DPSKGRWVEGITSEGYHYYYDLISGASQWEKPEG) and 163–196 (TAVKTVWVEGLSEDGFTYYYNTETGESRWEKPDD). The span at 189–198 (SRWEKPDDFI) shows a compositional bias: basic and acidic residues. The span at 203–215 (DLPSSKVNENSLG) shows a compositional bias: polar residues. Composition is skewed to basic and acidic residues over residues 218 to 229 (DESKSSDSHSDS) and 243 to 257 (ETEKPKIKFKEKNKN). Residues Ser-220, Ser-227, and Ser-229 each carry the phosphoserine modification. Position 262 is a phosphoserine (Ser-262). Positions 298-309 (QEIKQEVESHEE) are enriched in basic and acidic residues. The span at 316 to 326 (STENEYVSTSE) shows a compositional bias: polar residues. Residues 357-375 (KKRRTENGKSRNLRQRGDD) form an interaction with SNRNP200 region. Basic and acidic residues predominate over residues 361 to 376 (TENGKSRNLRQRGDDQ).

Component of the spliceosome B complex. Associated with U2 snRNPs. Binds splicing factors SNRPB, SNRPC and SF1. Interacts via the WW domains with the Pro-rich domains of KHDRBS1/SAM68. Interacts via the WW domains with the Pro-rich domains of WBP11. Interacts with SNRNP200.

The protein localises to the nucleus. The protein resides in the nucleus speckle. Functionally, involved in pre-mRNA splicing as a component of the spliceosome. May play a role in cross-intron bridging of U1 and U2 snRNPs in the mammalian A complex. The protein is WW domain-binding protein 4 (WBP4) of Homo sapiens (Human).